A 284-amino-acid polypeptide reads, in one-letter code: Bifunctional protein FolD (284 aa).

NADP(+)-binding positions include 166 to 168 (GAS) and I232.

It belongs to the tetrahydrofolate dehydrogenase/cyclohydrolase family. As to quaternary structure, homodimer.

It carries out the reaction (6R)-5,10-methylene-5,6,7,8-tetrahydrofolate + NADP(+) = (6R)-5,10-methenyltetrahydrofolate + NADPH. The catalysed reaction is (6R)-5,10-methenyltetrahydrofolate + H2O = (6R)-10-formyltetrahydrofolate + H(+). It functions in the pathway one-carbon metabolism; tetrahydrofolate interconversion. Functionally, catalyzes the oxidation of 5,10-methylenetetrahydrofolate to 5,10-methenyltetrahydrofolate and then the hydrolysis of 5,10-methenyltetrahydrofolate to 10-formyltetrahydrofolate. This Pseudomonas entomophila (strain L48) protein is Bifunctional protein FolD.